We begin with the raw amino-acid sequence, 118 residues long: MSAPTSYDDEELEELLRRKAAQEQKRLEEERKRKAELESQKESILRVILTPEARQRLTNIKLVKPEFAESLENQLIALAQSGRIKVPITDEELKQILEQISEQNRRDFKIQIRERGWK.

Belongs to the PDCD5 family.

The chain is DNA-binding protein YG5714_1868 from Saccharolobus islandicus (strain Y.G.57.14 / Yellowstone #1) (Sulfolobus islandicus).